Consider the following 103-residue polypeptide: Nucleoid-associated protein A2cp1_3777 (103 aa).

Belongs to the YbaB/EbfC family. Homodimer.

The protein resides in the cytoplasm. It is found in the nucleoid. Binds to DNA and alters its conformation. May be involved in regulation of gene expression, nucleoid organization and DNA protection. This chain is Nucleoid-associated protein A2cp1_3777, found in Anaeromyxobacter dehalogenans (strain 2CP-1 / ATCC BAA-258).